A 394-amino-acid chain; its full sequence is Phosphopentomutase (394 aa).

6 residues coordinate Mn(2+): Asp-13, Asp-286, His-291, Asp-327, His-328, and His-339.

It belongs to the phosphopentomutase family. The cofactor is Mn(2+).

It is found in the cytoplasm. The catalysed reaction is 2-deoxy-alpha-D-ribose 1-phosphate = 2-deoxy-D-ribose 5-phosphate. It carries out the reaction alpha-D-ribose 1-phosphate = D-ribose 5-phosphate. It participates in carbohydrate degradation; 2-deoxy-D-ribose 1-phosphate degradation; D-glyceraldehyde 3-phosphate and acetaldehyde from 2-deoxy-alpha-D-ribose 1-phosphate: step 1/2. Isomerase that catalyzes the conversion of deoxy-ribose 1-phosphate (dRib-1-P) and ribose 1-phosphate (Rib-1-P) to deoxy-ribose 5-phosphate (dRib-5-P) and ribose 5-phosphate (Rib-5-P), respectively. The chain is Phosphopentomutase from Bacillus thuringiensis (strain Al Hakam).